The chain runs to 232 residues: Replicative helicase loading/DNA remodeling protein DnaD (232 aa).

Residues 1–98 (MKKQQFIDMQ…QNGIKFEKYS (98 aa)) are N-terminal domain. Positions 1–116 (MKKQQFIDMQ…YEYIQLAQNQ (116 aa)) are DDBH1. Residues 99 to 205 (LQPLWGKLYE…VEQAKIHSQK (107 aa)) form a C-terminal domain region. Positions 131–200 (TIFEEEFARP…NGLKTVEQAK (70 aa)) are DDBH2. The interval 206-232 (FRRVQAKQNEPQKEYKRQVPFYNWLEQ) is C-terminal tail.

This sequence belongs to the DnaB/DnaD family. The DNA replisome assembles sequentially on oriC in this order; DnaA, DnaD, DnaB, DnaI-DnaC helicase. Homodimer. Homotetramer. Oligomerization in vitro is concentration dependent. Part of the replication restart primosome which assembles in this order; PriA, DnaD then DnaB. The preferred DNA substrate mimics an arrested DNA replication fork with unreplicated lagging strand. Interacts with DnaA, DnaB and PriA. Interaction with DnaB requires DnaD to dimerize.

The protein resides in the cytoplasm. Recruitment to oriC requires DnaA but not DnaB, DnaC or DnaI and is blocked by SirA. Its function is as follows. Required to load replicative helicase DnaC onto replication forks. Binds to a DnaD recognition element (DRE) which has pairs of 5'-TnnT-3' motifs; there is a strong DRE at oriC opposite the DnaA-trios recognized by DnaA. During DNA replication from the origin of replication (oriC) in the DNA replisome, DnaD is required after DnaA, before DnaB and subsequent helicase DnaC loading. A component of the replication restart primosome, which reloads the replicative helicase on sites other than oriC. DnaB, DnaD and DnaI may also be required for a PriA-independent pathway of replication fork restart. DnaB and DnaD work together to allow DnaB access to single-stranded (ss)DNA. Has DNA remodeling activity that converts supercoiled plasmid into an open circular form; DnaD forms scaffolds inside the plasmid DNA. Plasmid relaxation incorporates both wrapping around the DnaD protein scaffold and simultaneous untwisting, no nicking of the DNA is seen. Also converts linear DNA into an open circular form. Disrupts a replicative helicase-DnaI complex. Inhibits the ability of DnaA-ATP to form a helix on DNA; does not disassemble preformed helices in vitro. Binds ssDNA, and replication fork-like substrates, supercoiled plasmid, but not stably to short double-stranded (ds)DNA. DnaD stimulates DnaB DNA-binding activities. DnaB and DnaD are required to load helicase on the repN plasmid origin of replication (oriN). Causes a severe growth defect upon overexpression even in an oriC-independent strain. The protein is Replicative helicase loading/DNA remodeling protein DnaD of Bacillus subtilis (strain 168).